A 460-amino-acid polypeptide reads, in one-letter code: MSGRLPFEEQLLSGQLRPSAEEREYIAGVARRLLDAINASGKATGMVVGSIARNTWVKGDRDLDVFLLFSPEMPREALETEGLALARSIARAFTPMFHEKYAEHPYINANVEGIDVDLVPCYNVASAEHIQSAVDRTPFHTRYITDKINGLTDDVLLLKQFAKAGGIYGSDQMTEGFSGYLCELLVLHYGGFAPLLAAAAEWRPPVIIDIGKHAAKKFDEPLVVIDPVDPRRNVAAAVSLDRMAEFVELARGYRDAPSEEFFRIRKEYPCCPADLAALLASRGTSLYAVTFATPPFIEEIVVPQLKRSTGAISDLLDRSGFAVHHAHYRMGPGRCMLLFELIIDELPPIRRHEGPPVWNRVNAEKFREKYRTSPLPGPFIENGRYVTEVPREFTRAGDLISSPAILSVGTGRHVRESLGKDWCVLEGADCWQEEFSGFIATFFSRRSPLVRIERDRPGRE.

Serine 50 and arginine 53 together coordinate ATP. Positions 50 and 53 each coordinate CTP. Mg(2+)-binding residues include aspartate 62, aspartate 64, and aspartate 117. ATP contacts are provided by histidine 140, lysine 159, and tyrosine 168. Residues histidine 140, lysine 159, and tyrosine 168 each contribute to the CTP site.

The protein belongs to the tRNA nucleotidyltransferase/poly(A) polymerase family. Archaeal CCA-adding enzyme subfamily. In terms of assembly, homodimer. Mg(2+) is required as a cofactor.

The enzyme catalyses a tRNA precursor + 2 CTP + ATP = a tRNA with a 3' CCA end + 3 diphosphate. It carries out the reaction a tRNA with a 3' CCA end + 2 CTP + ATP = a tRNA with a 3' CCACCA end + 3 diphosphate. Catalyzes the addition and repair of the essential 3'-terminal CCA sequence in tRNAs without using a nucleic acid template. Adds these three nucleotides in the order of C, C, and A to the tRNA nucleotide-73, using CTP and ATP as substrates and producing inorganic pyrophosphate. tRNA 3'-terminal CCA addition is required both for tRNA processing and repair. Also involved in tRNA surveillance by mediating tandem CCA addition to generate a CCACCA at the 3' terminus of unstable tRNAs. While stable tRNAs receive only 3'-terminal CCA, unstable tRNAs are marked with CCACCA and rapidly degraded. The protein is CCA-adding enzyme of Methanoregula boonei (strain DSM 21154 / JCM 14090 / 6A8).